The chain runs to 161 residues: Probable chemoreceptor glutamine deamidase CheD (161 aa).

Belongs to the CheD family.

The catalysed reaction is L-glutaminyl-[protein] + H2O = L-glutamyl-[protein] + NH4(+). Its function is as follows. Probably deamidates glutamine residues to glutamate on methyl-accepting chemotaxis receptors (MCPs), playing an important role in chemotaxis. The chain is Probable chemoreceptor glutamine deamidase CheD from Lachnoclostridium phytofermentans (strain ATCC 700394 / DSM 18823 / ISDg) (Clostridium phytofermentans).